The primary structure comprises 113 residues: Cell cycle protein GpsB (113 aa).

Residues 32–70 (LDSVIKDYENFGKEIERMKNENDRLTDKVDELNKQVSAG) adopt a coiled-coil conformation.

The protein belongs to the GpsB family. Forms polymers through the coiled coil domains. Interacts with PBP1, MreC and EzrA.

The protein resides in the cytoplasm. In terms of biological role, divisome component that associates with the complex late in its assembly, after the Z-ring is formed, and is dependent on DivIC and PBP2B for its recruitment to the divisome. Together with EzrA, is a key component of the system that regulates PBP1 localization during cell cycle progression. Its main role could be the removal of PBP1 from the cell pole after pole maturation is completed. Also contributes to the recruitment of PBP1 to the division complex. Not essential for septum formation. The chain is Cell cycle protein GpsB from Pediococcus pentosaceus (strain ATCC 25745 / CCUG 21536 / LMG 10740 / 183-1w).